A 258-amino-acid chain; its full sequence is Lysine-rich coiled-coil protein 1 (258 aa).

The interval aspartate 142 to phenylalanine 258 is disordered. The span at alanine 150–arginine 161 shows a compositional bias: basic residues. Composition is skewed to basic and acidic residues over residues histidine 162–serine 175, cysteine 183–leucine 213, and lysine 220–lysine 232. Residues glutamate 211 to glutamate 248 adopt a coiled-coil conformation.

The sequence is that of Lysine-rich coiled-coil protein 1 (KRCC1) from Pongo abelii (Sumatran orangutan).